A 207-amino-acid polypeptide reads, in one-letter code: Phosphatidylinositol phosphate synthase (207 aa).

Helical transmembrane passes span Leu-21–Ile-44 and Trp-50–Leu-67. Residue Asp-28–Thr-31 coordinates a CDP-1,2-diacyl-sn-glycerol. Positions 65 and 68 each coordinate Mg(2+). Residues Gly-69, Arg-73, and Ser-79 each contribute to the a CDP-1,2-diacyl-sn-glycerol site. Mg(2+) is bound by residues Asp-86 and Asp-90. 4 helical membrane passes run Thr-88–Ala-106, Val-112–Val-131, Arg-152–Ala-170, and Val-176–Val-195. The active-site Proton acceptor is Asp-90.

Belongs to the CDP-alcohol phosphatidyltransferase class-I family. Homodimer. Requires Mg(2+) as cofactor.

The protein resides in the cell membrane. It catalyses the reaction a CDP-1,2-diacyl-sn-glycerol + 1D-myo-inositol 3-phosphate = a 1,2-diacyl-sn-glycero-3-phospho-(1D-myo-inositol-3-phosphate) + CMP + H(+). It carries out the reaction 1,2-di-(9Z-octadecenoyl)-sn-glycero-3-cytidine-5'-diphosphate + 1D-myo-inositol 3-phosphate = 1,2-di-(9Z-octadecenoyl)-sn-glycero-3-phospho-(1D-myo-inositol-3-phosphate) + CMP + H(+). Its pathway is phospholipid metabolism; phosphatidylinositol phosphate biosynthesis. Catalyzes the conjugation of the 1'-hydroxyl group of D-myo-inositol-3-phosphate (also named L-myo-inositol-1-phosphate) with a lipid tail of cytidine diphosphate diacylglycerol (CDP-DAG), forming phosphatidylinositol phosphate (PIP) and CMP. PIP is a precursor of phosphatidylinositol (PI) which is an essential lipid required for cell wall formation. The sequence is that of Phosphatidylinositol phosphate synthase from Cutibacterium acnes (strain DSM 16379 / KPA171202) (Propionibacterium acnes).